Here is a 409-residue protein sequence, read N- to C-terminus: Probable beta-1,3-galactosyltransferase 3 (409 aa).

Residues 20-42 (WTFLLCFGSFCFGILFTDRMWII) traverse the membrane as a helical; Signal-anchor for type II membrane protein segment.

Belongs to the glycosyltransferase 31 family. The cofactor is Mn(2+).

The protein resides in the golgi apparatus membrane. The protein operates within protein modification; protein glycosylation. Its function is as follows. Beta-1,3-galactosyltransferase that transfers galactose from UDP-galactose to substrates with a terminal glycosyl residue. The protein is Probable beta-1,3-galactosyltransferase 3 (B3GALT3) of Arabidopsis thaliana (Mouse-ear cress).